A 138-amino-acid polypeptide reads, in one-letter code: Secreted RxLR effector protein 91 (138 aa).

Positions M1–C18 are cleaved as a signal peptide. Residues R34–R37 carry the RxLR motif. N-linked (GlcNAc...) asparagine glycosylation occurs at N93.

This sequence belongs to the RxLR effector family.

Its subcellular location is the secreted. It localises to the host nucleus. Secreted effector that completely suppresses the host cell death induced by cell death-inducing proteins. This chain is Secreted RxLR effector protein 91, found in Plasmopara viticola (Downy mildew of grapevine).